Consider the following 240-residue polypeptide: UDP-2,3-diacylglucosamine hydrolase (240 aa).

Mn(2+) is bound by residues aspartate 8, histidine 10, aspartate 41, asparagine 79, and histidine 114. Substrate is bound at residue 79–80 (NR). Aspartate 122, serine 160, asparagine 164, lysine 167, and histidine 195 together coordinate substrate. Mn(2+) contacts are provided by histidine 195 and histidine 197.

The protein belongs to the LpxH family. The cofactor is Mn(2+).

It is found in the cell inner membrane. The enzyme catalyses UDP-2-N,3-O-bis[(3R)-3-hydroxytetradecanoyl]-alpha-D-glucosamine + H2O = 2-N,3-O-bis[(3R)-3-hydroxytetradecanoyl]-alpha-D-glucosaminyl 1-phosphate + UMP + 2 H(+). Its pathway is glycolipid biosynthesis; lipid IV(A) biosynthesis; lipid IV(A) from (3R)-3-hydroxytetradecanoyl-[acyl-carrier-protein] and UDP-N-acetyl-alpha-D-glucosamine: step 4/6. Hydrolyzes the pyrophosphate bond of UDP-2,3-diacylglucosamine to yield 2,3-diacylglucosamine 1-phosphate (lipid X) and UMP by catalyzing the attack of water at the alpha-P atom. Involved in the biosynthesis of lipid A, a phosphorylated glycolipid that anchors the lipopolysaccharide to the outer membrane of the cell. This is UDP-2,3-diacylglucosamine hydrolase from Escherichia fergusonii (strain ATCC 35469 / DSM 13698 / CCUG 18766 / IAM 14443 / JCM 21226 / LMG 7866 / NBRC 102419 / NCTC 12128 / CDC 0568-73).